The following is a 443-amino-acid chain: GTPase Der (443 aa).

EngA-type G domains lie at Pro-3 to Pro-168 and Val-178 to Ser-353. GTP contacts are provided by residues Gly-9–Ser-16, Asp-56–Tyr-60, Asn-120–Glu-123, Gly-184–Ser-191, Asp-231–Leu-235, and Asn-296–Asp-299. Positions Gln-354 to Asn-438 constitute a KH-like domain.

It belongs to the TRAFAC class TrmE-Era-EngA-EngB-Septin-like GTPase superfamily. EngA (Der) GTPase family. In terms of assembly, associates with the 50S ribosomal subunit.

Its function is as follows. GTPase that plays an essential role in the late steps of ribosome biogenesis. This Chlorobium chlorochromatii (strain CaD3) protein is GTPase Der.